A 321-amino-acid polypeptide reads, in one-letter code: Methionine import ATP-binding protein MetN (321 aa).

Residues 2–241 (INAVDLHKVY…PGSLLARSLF (240 aa)) form the ABC transporter domain. 38 to 45 (GPSGAGKS) lines the ATP pocket.

Belongs to the ABC transporter superfamily. Methionine importer (TC 3.A.1.24) family. As to quaternary structure, the complex is composed of two ATP-binding proteins (MetN), two transmembrane proteins (MetI) and a solute-binding protein (MetQ).

The protein localises to the cell membrane. The enzyme catalyses L-methionine(out) + ATP + H2O = L-methionine(in) + ADP + phosphate + H(+). It catalyses the reaction D-methionine(out) + ATP + H2O = D-methionine(in) + ADP + phosphate + H(+). In terms of biological role, part of the ABC transporter complex MetNIQ involved in methionine import. Responsible for energy coupling to the transport system. The protein is Methionine import ATP-binding protein MetN of Thermobifida fusca (strain YX).